A 148-amino-acid polypeptide reads, in one-letter code: uncharacterized protein (148 aa).

A compositionally biased stretch (polar residues) spans 1-11 (MKPRNINNSLP). The disordered stretch occupies residues 1–31 (MKPRNINNSLPLQPLVPDQENKNKKNEEKSV). A compositionally biased stretch (basic and acidic residues) spans 19-30 (QENKNKKNEEKS).

This is an uncharacterized protein from Escherichia coli (strain K12).